A 179-amino-acid chain; its full sequence is ATP synthase subunit delta (179 aa).

The protein belongs to the ATPase delta chain family. In terms of assembly, F-type ATPases have 2 components, F(1) - the catalytic core - and F(0) - the membrane proton channel. F(1) has five subunits: alpha(3), beta(3), gamma(1), delta(1), epsilon(1). F(0) has three main subunits: a(1), b(2) and c(10-14). The alpha and beta chains form an alternating ring which encloses part of the gamma chain. F(1) is attached to F(0) by a central stalk formed by the gamma and epsilon chains, while a peripheral stalk is formed by the delta and b chains.

Its subcellular location is the cell membrane. Functionally, f(1)F(0) ATP synthase produces ATP from ADP in the presence of a proton or sodium gradient. F-type ATPases consist of two structural domains, F(1) containing the extramembraneous catalytic core and F(0) containing the membrane proton channel, linked together by a central stalk and a peripheral stalk. During catalysis, ATP synthesis in the catalytic domain of F(1) is coupled via a rotary mechanism of the central stalk subunits to proton translocation. In terms of biological role, this protein is part of the stalk that links CF(0) to CF(1). It either transmits conformational changes from CF(0) to CF(1) or is implicated in proton conduction. The polypeptide is ATP synthase subunit delta (Mycoplasmopsis pulmonis (strain UAB CTIP) (Mycoplasma pulmonis)).